The primary structure comprises 352 residues: Phosphoribosylformylglycinamidine cyclo-ligase (352 aa).

This sequence belongs to the AIR synthase family.

Its subcellular location is the cytoplasm. The catalysed reaction is 2-formamido-N(1)-(5-O-phospho-beta-D-ribosyl)acetamidine + ATP = 5-amino-1-(5-phospho-beta-D-ribosyl)imidazole + ADP + phosphate + H(+). The protein operates within purine metabolism; IMP biosynthesis via de novo pathway; 5-amino-1-(5-phospho-D-ribosyl)imidazole from N(2)-formyl-N(1)-(5-phospho-D-ribosyl)glycinamide: step 2/2. The chain is Phosphoribosylformylglycinamidine cyclo-ligase from Stenotrophomonas maltophilia (strain R551-3).